Consider the following 267-residue polypeptide: Ribosomal RNA small subunit methyltransferase J (267 aa).

Residues 133–134 (ER) and Asp-187 contribute to the S-adenosyl-L-methionine site.

The protein belongs to the methyltransferase superfamily. RsmJ family.

The protein localises to the cytoplasm. It catalyses the reaction guanosine(1516) in 16S rRNA + S-adenosyl-L-methionine = N(2)-methylguanosine(1516) in 16S rRNA + S-adenosyl-L-homocysteine + H(+). Specifically methylates the guanosine in position 1516 of 16S rRNA. This Halorhodospira halophila (strain DSM 244 / SL1) (Ectothiorhodospira halophila (strain DSM 244 / SL1)) protein is Ribosomal RNA small subunit methyltransferase J.